Consider the following 29-residue polypeptide: Toxin Bl-4 (29 aa).

Belongs to the long (4 C-C) scorpion toxin superfamily. Sodium channel inhibitor family. Beta subfamily. In terms of tissue distribution, expressed by the venom gland.

It is found in the secreted. In terms of biological role, excitatory insect beta-toxins induce a spastic paralysis. They bind voltage-independently at site-4 of sodium channels (Nav) and shift the voltage of activation toward more negative potentials thereby affecting sodium channel activation and promoting spontaneous and repetitive firing. The fraction to which this protein belongs exhibits low toxicity and induces transient paralysis in all insects tested (the crickets A.domesticus). This chain is Toxin Bl-4, found in Buthacus leptochelys (Egyptian fat-tailed scorpion).